Reading from the N-terminus, the 297-residue chain is Sirohydrochlorin cobaltochelatase CbiKP (297 aa).

Residues 1–28 (MSRHPMVTRLLCLVFSCLIILACSPAFA) form the signal peptide. H124 is a heme binding site. H182 serves as the catalytic Proton acceptor. Co(2+) is bound by residues H182, E212, and H244.

This sequence belongs to the CbiK family. As to quaternary structure, homotetramer; dimer of dimers.

Its subcellular location is the periplasm. The enzyme catalyses Co-sirohydrochlorin + 2 H(+) = sirohydrochlorin + Co(2+). It carries out the reaction siroheme + 2 H(+) = sirohydrochlorin + Fe(2+). In terms of biological role, catalyzes the insertion of Co(2+) into sirohydrochlorin. To a lesser extent, is also able to insert Fe(2+) into sirohydrochlorin, yielding siroheme. Its periplasmic location means that it cannot participate in cobalamin biosynthesis and its genomic environment suggests it is likely to be associated with a heme or metal transport system. The protein is Sirohydrochlorin cobaltochelatase CbiKP (cbiKp) of Nitratidesulfovibrio vulgaris (strain ATCC 29579 / DSM 644 / CCUG 34227 / NCIMB 8303 / VKM B-1760 / Hildenborough) (Desulfovibrio vulgaris).